Consider the following 327-residue polypeptide: Solute-binding protein SPO1773 (327 aa).

Residues 1–26 (MTISFKGLARGVACAALVLAALPAAA) form the signal peptide. Residues 39–41 (HTW), Arg150, 170–172 (RIT), and Asp211 each bind 3-hydroxybenzoate.

The protein belongs to the bacterial solute-binding protein 7 family. As to quaternary structure, the complex is comprised of an extracytoplasmic solute-binding protein and a heteromeric permease formed by two transmembrane proteins.

It is found in the periplasm. Its function is as follows. Solute-binding protein that binds 3,4-dihydroxybenzoate and 3-hydroxybenzoate (in vitro). Probably part of a tripartite ATP-independent periplasmic (TRAP) transport system that mediates solute transport into the cytoplasm. In Ruegeria pomeroyi (strain ATCC 700808 / DSM 15171 / DSS-3) (Silicibacter pomeroyi), this protein is Solute-binding protein SPO1773.